Reading from the N-terminus, the 253-residue chain is uncharacterized protein (253 aa).

This is an uncharacterized protein from Mycoplasma pneumoniae (strain ATCC 29342 / M129 / Subtype 1) (Mycoplasmoides pneumoniae).